The chain runs to 1356 residues: Fibronectin type III domain containing protein 3C1 (1356 aa).

3 disordered regions span residues P303–N341, T356–A402, and N428–C452. Residues D308 to N341 show a composition bias toward low complexity. Polar residues predominate over residues P370 to N393. The segment covering L439–T448 has biased composition (basic and acidic residues). Fibronectin type-III domains are found at residues N454–C549, P553–A648, L650–A741, and C745–P842. Positions G825–P838 are enriched in polar residues. The disordered stretch occupies residues G825–E894. Residues P883–E894 are compositionally biased toward basic and acidic residues. Fibronectin type-III domains follow at residues P914–T1007, E1017–L1103, P1104–P1199, and A1202–H1299. The interval H1299–E1320 is disordered. Residues T1330–V1350 form a helical membrane-spanning segment. At Q1351 to N1356 the chain is on the cytoplasmic side.

Belongs to the FNDC3 family.

It localises to the membrane. This is Fibronectin type III domain containing protein 3C1 (Fndc3c1) from Mus musculus (Mouse).